The chain runs to 732 residues: MAP7 domain-containing protein 2 (732 aa).

Residue methionine 1 is modified to N-acetylmethionine. Gly residues predominate over residues 1 to 10 (MERGGGGSGT). Disordered regions lie at residues 1-64 (MERG…RREE), 95-123 (WRKL…LREE), 157-186 (PGGH…KRLS), 210-244 (GPLN…GKEA), and 279-509 (EFSG…KQKE). A compositionally biased stretch (basic and acidic residues) spans 49-64 (LKSDERQRLAKERREE). Residues 51–146 (SDERQRLAKE…RTQQLELKKK (96 aa)) adopt a coiled-coil conformation. The span at 329–345 (MPKRKAEKEKSNKEREG) shows a compositional bias: basic and acidic residues. Residues 347-357 (LAQQAAGPQGE) show a composition bias toward low complexity. Positions 359 to 374 (ALEKHVVDKHASEKHA) are enriched in basic and acidic residues. A compositionally biased stretch (low complexity) spans 375–386 (AAAGGKAENSAA). Residues 404-509 (LAEKRRQARL…EKAMIEKQKE (106 aa)) show a composition bias toward basic and acidic residues.

The protein belongs to the MAP7 family. As to quaternary structure, interacts (via N-terminus) with microtubules; facilitates microtubule stabilization. Interacts with kinesin-1 family members, KIF5A, KIF5B and KIF5C.

It is found in the cytoplasm. The protein resides in the cytoskeleton. Its subcellular location is the microtubule organizing center. The protein localises to the centrosome. It localises to the midbody. It is found in the cell projection. The protein resides in the neuron projection. Its subcellular location is the axon. In terms of biological role, microtubule-stabilizing protein that plays a role in the control of cell motility and neurite outgrowth via direct binding to the microtubule. Acts as a critical cofactor for kinesin transport. In the proximal axon, regulates kinesin-1 family members, KIF5A, KIF5B and KIF5C recruitment to microtubules and contributes to kinesin-1-mediated transport in the axons. The protein is MAP7 domain-containing protein 2 (MAP7D2) of Homo sapiens (Human).